A 257-amino-acid polypeptide reads, in one-letter code: MSSELNVPVDPSTPACCSEPGTKGMDYRDWVRRSYLELVTSNHHSVQALSWRKLYLSRAKLKASSRTSALLSGFAMVAMVEVQLEMQYKYPQMLLIAFSACTTVLVAVHLFALLISTCILPNVEAVSNIHNLNSISESPHERMHPYIELAWGFSTVLGILLFLAEVVLLCWIKFLPVDSILKNDTTTIQKPSGHAGWQAALVSTIIMVPVGLIFVVFTIHFYRSLVRHKTERHNREIEELHKLKVQLDGHDRGMQVV.

The next 4 membrane-spanning stretches (helical) occupy residues 67–84, 95–115, 149–169, and 199–219; these read TSAL…EVQL, LIAF…ALLI, LAWG…VVLL, and AALV…VFTI.

The protein belongs to the Orai family.

It localises to the membrane. Ca(2+) release-activated Ca(2+)-like (CRAC-like) channel subunit which mediates Ca(2+) influx and increase in Ca(2+)-selective current by synergy with the Ca(2+) sensor, STIM1. The chain is Protein orai-2 (ORAI2) from Gallus gallus (Chicken).